We begin with the raw amino-acid sequence, 130 residues long: Small ribosomal subunit protein uS11 (130 aa).

The protein belongs to the universal ribosomal protein uS11 family. Part of the 30S ribosomal subunit.

Located on the platform of the 30S subunit. This Nanoarchaeum equitans (strain Kin4-M) protein is Small ribosomal subunit protein uS11.